Consider the following 122-residue polypeptide: Large ribosomal subunit protein uL14 (122 aa).

The protein belongs to the universal ribosomal protein uL14 family. As to quaternary structure, part of the 50S ribosomal subunit. Forms a cluster with proteins L3 and L19. In the 70S ribosome, L14 and L19 interact and together make contacts with the 16S rRNA in bridges B5 and B8.

Functionally, binds to 23S rRNA. Forms part of two intersubunit bridges in the 70S ribosome. In Brucella abortus (strain 2308), this protein is Large ribosomal subunit protein uL14.